We begin with the raw amino-acid sequence, 323 residues long: Sphingolipid delta(4)-desaturase DES1 (323 aa).

Glycine 2 carries the N-myristoyl glycine lipid modification. A run of 2 helical transmembrane segments spans residues proline 41–valine 61 and tryptophan 68–isoleucine 88. Residues histidine 89–histidine 93 carry the Histidine box-1 motif. The chain crosses the membrane as a helical span at residues tryptophan 107–tyrosine 127. The short motif at histidine 128–histidine 132 is the Histidine box-2 element. 3 helical membrane-spanning segments follow: residues phenylalanine 152–phenylalanine 172, tyrosine 184–leucine 204, and leucine 209–phenylalanine 229. The Histidine box-3 motif lies at histidine 259–histidine 263. Serine 307 carries the phosphoserine modification.

It belongs to the fatty acid desaturase type 1 family. DEGS subfamily. As to quaternary structure, interacts with RLBP1; the interaction increases synthesis of chromophore-precursors by DEGS1. Post-translationally, myristoylation can target the enzyme to the mitochondria leading to an increase in ceramide levels.

The protein localises to the mitochondrion membrane. It is found in the endoplasmic reticulum membrane. The catalysed reaction is an N-acylsphinganine + 2 Fe(II)-[cytochrome b5] + O2 + 2 H(+) = an N-acylsphing-4-enine + 2 Fe(III)-[cytochrome b5] + 2 H2O. It carries out the reaction all-trans-retinol = 11-cis-retinol. It catalyses the reaction all-trans-retinol = 9-cis-retinol. The enzyme catalyses all-trans-retinol = 13-cis-retinol. The catalysed reaction is 11-cis-retinol = 13-cis-retinol. It carries out the reaction 11-cis-retinol = 9-cis-retinol. Has sphingolipid-delta-4-desaturase activity. Converts D-erythro-sphinganine to D-erythro-sphingosine (E-sphing-4-enine). Catalyzes the equilibrium isomerization of retinols. The protein is Sphingolipid delta(4)-desaturase DES1 (DEGS1) of Pongo abelii (Sumatran orangutan).